The following is a 249-amino-acid chain: Large ribosomal subunit protein uL4 (249 aa).

It belongs to the universal ribosomal protein uL4 family. As to quaternary structure, part of the 50S ribosomal subunit.

Its function is as follows. One of the primary rRNA binding proteins, this protein initially binds near the 5'-end of the 23S rRNA. It is important during the early stages of 50S assembly. It makes multiple contacts with different domains of the 23S rRNA in the assembled 50S subunit and ribosome. Functionally, forms part of the polypeptide exit tunnel. The polypeptide is Large ribosomal subunit protein uL4 (Methanoculleus marisnigri (strain ATCC 35101 / DSM 1498 / JR1)).